A 132-amino-acid polypeptide reads, in one-letter code: Large ribosomal subunit protein bL12 (132 aa).

Basic and acidic residues predominate over residues E100 to G126. Residues E100–K132 form a disordered region.

The protein belongs to the bacterial ribosomal protein bL12 family. In terms of assembly, homodimer. Part of the ribosomal stalk of the 50S ribosomal subunit. Forms a multimeric L10(L12)X complex, where L10 forms an elongated spine to which 2 to 4 L12 dimers bind in a sequential fashion. Binds GTP-bound translation factors.

Its function is as follows. Forms part of the ribosomal stalk which helps the ribosome interact with GTP-bound translation factors. Is thus essential for accurate translation. The polypeptide is Large ribosomal subunit protein bL12 (Thermosynechococcus vestitus (strain NIES-2133 / IAM M-273 / BP-1)).